A 494-amino-acid chain; its full sequence is 3-octaprenyl-4-hydroxybenzoate carboxy-lyase (494 aa).

Residue Asn-172 coordinates Mn(2+). Prenylated FMN is bound by residues 175–177, 189–191, and 194–195; these read IYR, RWL, and RG. Glu-238 lines the Mn(2+) pocket. The active-site Proton donor is Asp-287.

This sequence belongs to the UbiD family. As to quaternary structure, homohexamer. Prenylated FMN serves as cofactor. Requires Mn(2+) as cofactor.

Its subcellular location is the cell membrane. The enzyme catalyses a 4-hydroxy-3-(all-trans-polyprenyl)benzoate + H(+) = a 2-(all-trans-polyprenyl)phenol + CO2. It functions in the pathway cofactor biosynthesis; ubiquinone biosynthesis. Its function is as follows. Catalyzes the decarboxylation of 3-octaprenyl-4-hydroxy benzoate to 2-octaprenylphenol, an intermediate step in ubiquinone biosynthesis. The protein is 3-octaprenyl-4-hydroxybenzoate carboxy-lyase of Citrobacter koseri (strain ATCC BAA-895 / CDC 4225-83 / SGSC4696).